The sequence spans 365 residues: tRNA/tmRNA (uracil-C(5))-methyltransferase (365 aa).

Residues Gln189, Tyr217, Asn222, Glu238, and Asp298 each contribute to the S-adenosyl-L-methionine site. Cys323 acts as the Nucleophile in catalysis. Catalysis depends on Glu357, which acts as the Proton acceptor.

It belongs to the class I-like SAM-binding methyltransferase superfamily. RNA M5U methyltransferase family. TrmA subfamily.

The catalysed reaction is uridine(54) in tRNA + S-adenosyl-L-methionine = 5-methyluridine(54) in tRNA + S-adenosyl-L-homocysteine + H(+). It carries out the reaction uridine(341) in tmRNA + S-adenosyl-L-methionine = 5-methyluridine(341) in tmRNA + S-adenosyl-L-homocysteine + H(+). Dual-specificity methyltransferase that catalyzes the formation of 5-methyluridine at position 54 (m5U54) in all tRNAs, and that of position 341 (m5U341) in tmRNA (transfer-mRNA). The polypeptide is tRNA/tmRNA (uracil-C(5))-methyltransferase (Shewanella sediminis (strain HAW-EB3)).